The sequence spans 234 residues: Sugar fermentation stimulation protein A (234 aa).

The H-T-H motif DNA-binding region spans 201–220 (LLSEAQQRGVEILAYKAEIS).

This sequence belongs to the SfsA family.

Binds to DNA non-specifically. Could be a regulatory factor involved in maltose metabolism. This Shigella flexneri serotype 5b (strain 8401) protein is Sugar fermentation stimulation protein A.